A 334-amino-acid polypeptide reads, in one-letter code: O(6)-methylguanine-induced apoptosis 2 (334 aa).

Residues 1–60 (MDNSAQKNERTGKHPRRASEVQKGFTAAYPTQSSIPFKSQASVIPESEKKGFNSQAKRFP) form a disordered region. Residues 7-20 (KNERTGKHPRRASE) are compositionally biased toward basic and acidic residues. The span at 29–42 (YPTQSSIPFKSQAS) shows a compositional bias: polar residues. 7 STPGR repeats span residues 67 to 74 (PGPGFYNV), 109 to 117 (PAANAYTIP), 148 to 155 (PAPNYYNA), 187 to 206 (GPPP…SPNT), 225 to 257 (GPGP…SAQP), 267 to 282 (PGPG…GPRK), and 306 to 316 (LPGPATYKPEL). Tyr-72 carries the post-translational modification Phosphotyrosine.

It belongs to the STPG1 family.

It is found in the cytoplasm. The protein localises to the nucleus. In terms of biological role, may positively contribute to the induction of apoptosis triggered by O(6)-methylguanine. This Homo sapiens (Human) protein is O(6)-methylguanine-induced apoptosis 2 (STPG1).